An 85-amino-acid chain; its full sequence is Putative membrane protein insertion efficiency factor (85 aa).

This sequence belongs to the UPF0161 family.

The protein localises to the cell inner membrane. Its function is as follows. Could be involved in insertion of integral membrane proteins into the membrane. This Serratia proteamaculans (strain 568) protein is Putative membrane protein insertion efficiency factor.